We begin with the raw amino-acid sequence, 178 residues long: Probable chorismate pyruvate-lyase (178 aa).

Residues M37, R78, L114, and E165 each coordinate substrate.

This sequence belongs to the UbiC family.

The protein localises to the cytoplasm. It carries out the reaction chorismate = 4-hydroxybenzoate + pyruvate. It functions in the pathway cofactor biosynthesis; ubiquinone biosynthesis. In terms of biological role, removes the pyruvyl group from chorismate, with concomitant aromatization of the ring, to provide 4-hydroxybenzoate (4HB) for the ubiquinone pathway. The chain is Probable chorismate pyruvate-lyase from Aeromonas hydrophila subsp. hydrophila (strain ATCC 7966 / DSM 30187 / BCRC 13018 / CCUG 14551 / JCM 1027 / KCTC 2358 / NCIMB 9240 / NCTC 8049).